Consider the following 79-residue polypeptide: Putative defensin-like protein 203 (79 aa).

A signal peptide spans 1 to 27 (MAKLIVNFSALLMIILLVSNGLPKAVA). 4 disulfide bridges follow: cysteine 30–cysteine 79, cysteine 40–cysteine 64, cysteine 49–cysteine 73, and cysteine 53–cysteine 75.

This sequence belongs to the DEFL family.

The protein localises to the secreted. The chain is Putative defensin-like protein 203 from Arabidopsis thaliana (Mouse-ear cress).